A 346-amino-acid polypeptide reads, in one-letter code: Actin-like protein 10 (346 aa).

This sequence belongs to the actin family.

This Mus musculus (Mouse) protein is Actin-like protein 10 (Actl10).